Consider the following 132-residue polypeptide: Transthyretin-like protein 16 (132 aa).

The first 19 residues, 1-19, serve as a signal peptide directing secretion; that stretch reads MRSLVVCLLLAACALECTA. Residue N23 is glycosylated (N-linked (GlcNAc...) asparagine).

It belongs to the nematode transthyretin-like family.

Its subcellular location is the secreted. The chain is Transthyretin-like protein 16 (ttr-16) from Caenorhabditis elegans.